We begin with the raw amino-acid sequence, 391 residues long: Secreted aspartic protease 1 (391 aa).

Residues 1–18 (MFLKNIFIALAIALLVDA) form the signal peptide. The propeptide at 19–50 (SPAKRSPGFVTLDFDVIKTPVNATGQEGKVKR) is activation peptide. Residue N40 is glycosylated (N-linked (GlcNAc...) asparagine). The region spanning 64 to 377 (YAADITIGSN…DLDDDKISLA (314 aa)) is the Peptidase A1 domain. D82 is an active-site residue. 82–84 (DTG) is a binding site for pepstatin A. A disulfide bridge connects residues C97 and C109. Zn(2+)-binding residues include D241 and D263. The active site involves D267. 267–271 (DSGTT) is a binding site for pepstatin A. A disulfide bridge connects residues C305 and C343.

It belongs to the peptidase A1 family. Monomer.

It is found in the secreted. The enzyme catalyses Preferential cleavage at the carboxyl of hydrophobic amino acids, but fails to cleave 15-Leu-|-Tyr-16, 16-Tyr-|-Leu-17 and 24-Phe-|-Phe-25 of insulin B chain. Activates trypsinogen, and degrades keratin.. Inhibited by pepstatin A analogs and squash aspartic peptidase inhibitor (SQAPI). Functionally, secreted aspartic peptidases (SAPs) are a group of ten acidic hydrolases considered as key virulence factors. These enzymes supply the fungus with nutrient amino acids as well as are able to degrade the selected host's proteins involved in the immune defense. Induces host inflammatory cytokine production in a proteolytic activity-independent way. Plays a role in tissue damage during superficial infection. Moreover, acts toward human hemoglobin though limited proteolysis to generate a variety of antimicrobial hemocidins, enabling to compete with the other microorganisms of the same physiological niche using the microbicidal peptides generated from the host protein. In terms of biological role, plays a key role in defense against host by cleaving histatin-5 (Hst 5), a peptide from human saliva that carries out fungicidal activity. The cleavage rate decreases in an order of SAP2 &gt; SAP9 &gt; SAP3 &gt; SAP7 &gt; SAP4 &gt; SAP1 &gt; SAP8. The first cleavage occurs between residues 'Lys-17' and 'His-18' of Hst 5, giving DSHAKRHHGYKRKFHEK and HHSHRGY peptides. Further fragmentation by SAP1 results in AKRHHGYKRKFHEK and AKRHHGY products. The chain is Secreted aspartic protease 1 from Candida albicans (Yeast).